A 213-amino-acid chain; its full sequence is Putative thymidylate kinase 251L (213 aa).

ATP is bound at residue 21–28 (GCDKTGKS).

It belongs to the thymidylate kinase family.

The enzyme catalyses dTMP + ATP = dTDP + ADP. The protein operates within pyrimidine metabolism; dTTP biosynthesis. In terms of biological role, catalyzes the conversion of dTMP to dTDP. The sequence is that of Putative thymidylate kinase 251L from Acheta domesticus (House cricket).